The chain runs to 664 residues: Transmembrane protein 201 (664 aa).

M1 is modified (N-acetylmethionine). Over 1–214 (MEGVSALLAS…SSSAVKAPFQ (214 aa)) the chain is Nuclear. A helical transmembrane segment spans residues 215–235 (VILLRALAFLACAFLLFTTLY). The Perinuclear space portion of the chain corresponds to 236 to 297 (GPSEPFTPGA…EAWAFGQSHQ (62 aa)). A compositionally biased stretch (low complexity) spans 245-261 (AALPPALPPGGNSSAAS). The interval 245–264 (AALPPALPPGGNSSAASDNT) is disordered. The chain crosses the membrane as a helical span at residues 298–318 (TSIVAVGLLTCLLAMLLAGRI). The Nuclear segment spans residues 319–322 (RLRR). A helical membrane pass occupies residues 323–343 (IDAFSTCLWALLLGLHLAEHY). The Perinuclear space portion of the chain corresponds to 344–356 (LQAASPGWLDTLK). Residues 357–374 (FSTTSLCCLVGFTAAVAT) traverse the membrane as a helical segment. Residues 375-642 (RKSTGPRRFR…ARVSPSLVRG (268 aa)) lie on the Nuclear side of the membrane. 7 positions are modified to phosphoserine: S441, S444, S450, S454, S466, S477, and S480. The segment at 502-522 (PLPSPAPSVASSVASSSGSLR) is disordered. Residues 508–520 (PSVASSVASSSGS) show a composition bias toward low complexity. S529 is subject to Phosphoserine. The segment at 544–629 (SSPGEAPNTP…TTKGCSEETT (86 aa)) is disordered. Composition is skewed to basic and acidic residues over residues 578-587 (HTRDTKHTME) and 595-608 (DSAR…KEDE). The span at 610 to 628 (SQSSTCVVDTTTKGCSEET) shows a compositional bias: polar residues. A helical membrane pass occupies residues 643 to 663 (LLAVSLAVNALFTSAYLYQSL). R664 is a topological domain (perinuclear space).

The protein belongs to the TMEM201 family. In terms of assembly, isoform 2 interacts with EMD. Isoform 3 interacts with SUN2 and LMNA. May bind to Ran GTPase; has a greater affinity for Ran-GTP over Ran-GDP.

It is found in the nucleus inner membrane. Critical regulator of angiogenesis and endothelial cell (EC) migration. Promotes the migration of endothelial cells, which is essential for angiogenesis. Interacts with the linker of nucleoskeleton and cytoskeleton (LINC) complex, which plays a vital role in connecting the cell's cytoskeleton to the nuclear envelope. This interaction is essential for maintaining cellular structure and facilitating the movement of endothelial cells, which is critical for proper vascular development. Involved in nuclear movement during fibroblast polarization and migration. May recruit Ran GTPase to the nuclear periphery. Its function is as follows. May define a distinct membrane domain in the vicinity of the mitotic spindle. Involved in the organization of the nuclear envelope implicating EMD, SUN1 and A-type lamina. Functionally, proposed to be involved in actin-dependent nuclear movement; via SUN2 associates with transmembrane actin-associated nuclear (TAN) lines which are bound to F-actin cables and couple the nucleus to retrograde actin flow. This chain is Transmembrane protein 201 (Tmem201), found in Mus musculus (Mouse).